The sequence spans 125 residues: U-scoloptoxin(05)-Sm1a (125 aa).

Positions 1–20 (MNVLYTKIFFILILTRTSSA) are cleaved as a signal peptide.

It belongs to the scoloptoxin-05 family. Post-translationally, contains 4 disulfide bonds. As to expression, expressed by the venom gland.

It localises to the secreted. The polypeptide is U-scoloptoxin(05)-Sm1a (Scolopendra morsitans (Tanzanian blue ringleg centipede)).